Here is a 510-residue protein sequence, read N- to C-terminus: Probable cytosol aminopeptidase (510 aa).

Residues lysine 282 and aspartate 287 each coordinate Mn(2+). Lysine 294 is an active-site residue. Aspartate 305, aspartate 364, and glutamate 366 together coordinate Mn(2+). Residue arginine 368 is part of the active site.

Belongs to the peptidase M17 family. Mn(2+) serves as cofactor.

The protein resides in the cytoplasm. The enzyme catalyses Release of an N-terminal amino acid, Xaa-|-Yaa-, in which Xaa is preferably Leu, but may be other amino acids including Pro although not Arg or Lys, and Yaa may be Pro. Amino acid amides and methyl esters are also readily hydrolyzed, but rates on arylamides are exceedingly low.. The catalysed reaction is Release of an N-terminal amino acid, preferentially leucine, but not glutamic or aspartic acids.. Functionally, presumably involved in the processing and regular turnover of intracellular proteins. Catalyzes the removal of unsubstituted N-terminal amino acids from various peptides. In Cupriavidus pinatubonensis (strain JMP 134 / LMG 1197) (Cupriavidus necator (strain JMP 134)), this protein is Probable cytosol aminopeptidase.